A 516-amino-acid polypeptide reads, in one-letter code: L-amino acid oxidase bordonein-L (516 aa).

A signal peptide spans 1-18 (MNVFFMFSLLFLAALGSC). Cys-28 and Cys-189 are disulfide-bonded. FAD-binding positions include 61-62 (MA), 81-82 (EA), Arg-89, and 103-106 (GPMR). Positions 106 and 239 each coordinate substrate. Val-279 is a binding site for FAD. Cys-349 and Cys-430 are disulfide-bonded. N-linked (GlcNAc...) asparagine glycosylation occurs at Asn-379. Residue Tyr-390 coordinates substrate. FAD-binding positions include Glu-475 and 482–487 (GWIDST). 482–483 (GW) is a substrate binding site.

In terms of assembly, homodimer; non-covalently linked. FAD is required as a cofactor. In terms of processing, N-glycosylated. N-glycan probably consists of the disaccharide N-acetylglucosamine-fucose (HexNAc-Fuc). In terms of tissue distribution, expressed by the venom gland.

The protein resides in the secreted. The enzyme catalyses an L-alpha-amino acid + O2 + H2O = a 2-oxocarboxylate + H2O2 + NH4(+). It catalyses the reaction L-leucine + O2 + H2O = 4-methyl-2-oxopentanoate + H2O2 + NH4(+). The catalysed reaction is L-phenylalanine + O2 + H2O = 3-phenylpyruvate + H2O2 + NH4(+). It carries out the reaction L-tryptophan + O2 + H2O = indole-3-pyruvate + H2O2 + NH4(+). The enzyme catalyses L-methionine + O2 + H2O = 4-methylsulfanyl-2-oxobutanoate + H2O2 + NH4(+). It catalyses the reaction L-isoleucine + O2 + H2O = (S)-3-methyl-2-oxopentanoate + H2O2 + NH4(+). The catalysed reaction is L-arginine + O2 + H2O = 5-guanidino-2-oxopentanoate + H2O2 + NH4(+). It carries out the reaction L-histidine + O2 + H2O = 3-(imidazol-5-yl)pyruvate + H2O2 + NH4(+). Catalyzes an oxidative deamination of predominantly hydrophobic and aromatic L-amino acids, thus producing hydrogen peroxide that may contribute to the diverse toxic effects of this enzyme. Is highly active on L-Met, L-Leu, L-Trp, and L-Phe, moderately active on L-Ile, L-His, and L-Arg, and weakly or not active on L-Gln, L-Val, L-Asn, L-Ala, L-Lys, L-Ser, L-Thr, L-Pro, L-Asp, L-Gly, L-Tyr, L-Cys and L-Glu. This enzyme exhibits diverse biological activities, such as hemorrhage, hemolysis, edema, apoptosis of vascular endothelial cells or tumor cell lines, antibacterial and antiparasitic activities, as well as regulation of platelet aggregation. Its effect on platelets is controversial, since it either induces aggregation or inhibits agonist-induced aggregation. These different effects are probably due to different experimental conditions. In vitro, the enzyme exhibits cytotoxicity against fibroblast cell line and kills Leishmania amazonensis promastigotes, intensified by substrate addition. This chain is L-amino acid oxidase bordonein-L, found in Crotalus durissus terrificus (South American rattlesnake).